Reading from the N-terminus, the 677-residue chain is UvrABC system protein B (677 aa).

One can recognise a Helicase ATP-binding domain in the interval glutamate 24–arginine 412. An ATP-binding site is contributed by glycine 37–threonine 44. The Beta-hairpin motif lies at tyrosine 90–isoleucine 113. The 163-residue stretch at glutamine 429–arginine 591 folds into the Helicase C-terminal domain. Residues glutamate 636–leucine 671 form the UVR domain.

Belongs to the UvrB family. Forms a heterotetramer with UvrA during the search for lesions. Interacts with UvrC in an incision complex.

Its subcellular location is the cytoplasm. The UvrABC repair system catalyzes the recognition and processing of DNA lesions. A damage recognition complex composed of 2 UvrA and 2 UvrB subunits scans DNA for abnormalities. Upon binding of the UvrA(2)B(2) complex to a putative damaged site, the DNA wraps around one UvrB monomer. DNA wrap is dependent on ATP binding by UvrB and probably causes local melting of the DNA helix, facilitating insertion of UvrB beta-hairpin between the DNA strands. Then UvrB probes one DNA strand for the presence of a lesion. If a lesion is found the UvrA subunits dissociate and the UvrB-DNA preincision complex is formed. This complex is subsequently bound by UvrC and the second UvrB is released. If no lesion is found, the DNA wraps around the other UvrB subunit that will check the other stand for damage. The sequence is that of UvrABC system protein B from Bacteroides thetaiotaomicron (strain ATCC 29148 / DSM 2079 / JCM 5827 / CCUG 10774 / NCTC 10582 / VPI-5482 / E50).